A 183-amino-acid chain; its full sequence is BLOC-1-related complex subunit 8 homolog (183 aa).

Residues 152–183 (MIGPGTATGRTEAQAATSSNPGELQRSYTTLH) are disordered. Residues 159 to 183 (TGRTEAQAATSSNPGELQRSYTTLH) are compositionally biased toward polar residues.

Belongs to the BORCS8 family.

It is found in the lysosome membrane. Its function is as follows. May participate in the coupling of lysosomes to microtubule plus-end-directed kinesin motor. The protein is BLOC-1-related complex subunit 8 homolog of Drosophila melanogaster (Fruit fly).